Reading from the N-terminus, the 301-residue chain is Diaminopimelate epimerase (301 aa).

The substrate site is built by Asn-15, Gln-47, and Asn-67. Cys-76 acts as the Proton donor in catalysis. Substrate-binding positions include 77 to 78, Asn-163, Asn-197, and 215 to 216; these read GN and ER. The Proton acceptor role is filled by Cys-224. Substrate is bound at residue 225–226; the sequence is GS.

This sequence belongs to the diaminopimelate epimerase family. As to quaternary structure, homodimer.

Its subcellular location is the cytoplasm. It catalyses the reaction (2S,6S)-2,6-diaminopimelate = meso-2,6-diaminopimelate. Its pathway is amino-acid biosynthesis; L-lysine biosynthesis via DAP pathway; DL-2,6-diaminopimelate from LL-2,6-diaminopimelate: step 1/1. Functionally, catalyzes the stereoinversion of LL-2,6-diaminopimelate (L,L-DAP) to meso-diaminopimelate (meso-DAP), a precursor of L-lysine and an essential component of the bacterial peptidoglycan. The polypeptide is Diaminopimelate epimerase (Rhizobium meliloti (strain 1021) (Ensifer meliloti)).